We begin with the raw amino-acid sequence, 148 residues long: Calmodulin (148 aa).

A2 is subject to N-acetylalanine. EF-hand domains lie at D8–N43, P44–D79, D81–K116, and K116–K148. D21, D23, D25, C27, E32, D57, D59, N61, T63, E68, D94, D96, N98, and E105 together coordinate Ca(2+). K116 bears the N6,N6,N6-trimethyllysine mark. D129, D131, D133, Q135, and E140 together coordinate Ca(2+).

This sequence belongs to the calmodulin family.

Functionally, calmodulin mediates the control of a large number of enzymes, ion channels and other proteins by Ca(2+). Among the enzymes to be stimulated by the calmodulin-Ca(2+) complex are a number of protein kinases and phosphatases. The sequence is that of Calmodulin (CAMF1) from Fagus sylvatica (Beechnut).